Reading from the N-terminus, the 384-residue chain is Prokineticin receptor 2 (384 aa).

Topologically, residues 1 to 54 (MAAQNGNTSFTPNFNPPQDHASSLSFNFSYGDYDLPMDEDEDMTKTRTFFAAKI) are extracellular. N-linked (GlcNAc...) asparagine glycans are attached at residues asparagine 7 and asparagine 27. Residues 55-75 (VIGIALAGIMLVCGIGNFVFI) traverse the membrane as a helical segment. Residues 76–89 (AALTRYKKLRNLTN) are Cytoplasmic-facing. Residues 90–110 (LLIANLAISDFLVAIICCPFE) form a helical membrane-spanning segment. The Extracellular portion of the chain corresponds to 111–136 (MDYYVVRQLSWEHGHVLCASVNYLRT). A disulfide bridge connects residues cysteine 128 and cysteine 208. A helical transmembrane segment spans residues 137 to 157 (VSLYVSTNALLAIAIDRYLAI). At 158–171 (VHPLKPRMNYQTAS) the chain is on the cytoplasmic side. The helical transmembrane segment at 172–192 (FLIALVWMVSILIAIPSAYFA) threads the bilayer. At 193-223 (TETVLFIVKSQEKIFCGQIWPVDQQLYYKSY) the chain is on the extracellular side. The chain crosses the membrane as a helical span at residues 224–244 (FLFIFGVEFVGPVVTMTLCYA). Over 245–273 (RISRELWFKAVPGFQTEQIRKRLRCRRKT) the chain is Cytoplasmic. A helical membrane pass occupies residues 274–294 (VLVLMCILTAYVLCWAPFYGF). Residues 295-313 (TIVRDFFPTVFVKEKHYLT) are Extracellular-facing. A helical membrane pass occupies residues 314–334 (AFYVVECIAMSNSMINTVCFV). Topologically, residues 335–384 (TVKNNTMKYFKKMMLLHWRPSQRGSKSSADLDLRTNGVPTTEEVDCIRLK) are cytoplasmic.

It belongs to the G-protein coupled receptor 1 family. As to quaternary structure, homodimer. As to expression, expressed in the ileocecum, thyroid gland, pituitary gland, salivary gland, adrenal gland, testis, ovary and brain.

Its subcellular location is the cell membrane. In terms of biological role, receptor for prokineticin 2. Exclusively coupled to the G(q) subclass of heteromeric G proteins. Activation leads to mobilization of calcium, stimulation of phosphoinositide turnover and activation of p44/p42 mitogen-activated protein kinase. This chain is Prokineticin receptor 2 (PROKR2), found in Homo sapiens (Human).